The following is a 342-amino-acid chain: UHRF1-like protein (342 aa).

Residues 41-149 (SEATTLATPS…SHPGSEEEDI (109 aa)) form a disordered region. Residues 42 to 59 (EATTLATPSNLKTAGNQR) are compositionally biased toward polar residues. A compositionally biased stretch (basic and acidic residues) spans 74–90 (NRSDSPRKRPTKDREDL). Polar residues predominate over residues 115–141 (TREQVTFNSDRDTPNTPSRQIKSTHSH). The 155-residue stretch at 168–322 (GHIPGIGVGK…LMVCRYAFKR (155 aa)) folds into the YDG domain. D218 is a DNA binding site. Residues 236–257 (KGTKQNPKNLRTAPQTSHQSFD) form a disordered region. Polar residues predominate over residues 238–257 (TKQNPKNLRTAPQTSHQSFD).

It is found in the nucleus. Involved in the maintenance of DNA methylation. Binds hemimethylated DNA. This Cryptococcus neoformans var. grubii serotype A (strain H99 / ATCC 208821 / CBS 10515 / FGSC 9487) (Filobasidiella neoformans var. grubii) protein is UHRF1-like protein.